A 626-amino-acid chain; its full sequence is Polypeptide N-acetylgalactosaminyltransferase 5 (626 aa).

Topologically, residues 1–11 (MIIFKKKAILK) are cytoplasmic. The helical; Signal-anchor for type II membrane protein transmembrane segment at 12–31 (VLLLVPVFWICSLIFFAATS) threads the bilayer. N32 carries an N-linked (GlcNAc...) asparagine glycan. At 32–626 (NDSSQIGSNN…AIEHGAKPPS (595 aa)) the chain is on the lumenal side. Disulfide bonds link C165-C399, C390-C466, C502-C521, C544-C557, and C583-C598. The interval 174–284 (LPRTSVIICF…EGWMEPLLDR (111 aa)) is catalytic subdomain A. 2 residues coordinate substrate: D215 and R245. Position 268 (D268) interacts with Mn(2+). S269 provides a ligand contact to substrate. H270 serves as a coordination point for Mn(2+). N338 is a glycosylation site (N-linked (GlcNAc...) asparagine). Residues 345–407 (PVRSPTMAGG…PCSHVGHVFR (63 aa)) form a catalytic subdomain B region. A substrate-binding site is contributed by W376. Residue H404 participates in Mn(2+) binding. Substrate is bound by residues R407 and Y412. Residues 488 to 610 (AKGEVRNSAV…DDPYQHWKFK (123 aa)) enclose the Ricin B-type lectin domain.

This sequence belongs to the glycosyltransferase 2 family. GalNAc-T subfamily. The cofactor is Mn(2+).

It localises to the golgi apparatus membrane. It catalyses the reaction L-seryl-[protein] + UDP-N-acetyl-alpha-D-galactosamine = a 3-O-[N-acetyl-alpha-D-galactosaminyl]-L-seryl-[protein] + UDP + H(+). It carries out the reaction L-threonyl-[protein] + UDP-N-acetyl-alpha-D-galactosamine = a 3-O-[N-acetyl-alpha-D-galactosaminyl]-L-threonyl-[protein] + UDP + H(+). Its pathway is protein modification; protein glycosylation. In terms of biological role, catalyzes the initial reaction in O-linked oligosaccharide biosynthesis, the transfer of an N-acetyl-D-galactosamine residue to a serine or threonine residue on the protein receptor. This chain is Polypeptide N-acetylgalactosaminyltransferase 5 (gly-5), found in Caenorhabditis elegans.